Reading from the N-terminus, the 207-residue chain is Thymidylate kinase (207 aa).

7–14 (GPEGAGKS) serves as a coordination point for ATP.

Belongs to the thymidylate kinase family.

The enzyme catalyses dTMP + ATP = dTDP + ADP. Functionally, phosphorylation of dTMP to form dTDP in both de novo and salvage pathways of dTTP synthesis. This is Thymidylate kinase from Pseudomonas putida (strain W619).